Reading from the N-terminus, the 336-residue chain is D-aspartate oxidase (336 aa).

E34, K35, T41, S42, G304, V308, and S309 together coordinate FAD. Residues 334 to 336 (SKL) carry the Microbody targeting signal motif.

Belongs to the DAMOX/DASOX family. Monomer. It depends on FAD as a cofactor.

It is found in the peroxisome matrix. It catalyses the reaction D-aspartate + O2 + H2O = oxaloacetate + H2O2 + NH4(+). The enzyme catalyses D-glutamate + O2 + H2O = H2O2 + 2-oxoglutarate + NH4(+). In terms of biological role, selectively catalyzes the oxidative deamination of acidic amino acids. Suppresses the level of D-aspartate in the brain, an amino acid that can act as an agonist for glutamate receptors. Protects the organism from the toxicity of D-amino acids. May also function in the intestine. The chain is D-aspartate oxidase from Octopus vulgaris (Common octopus).